A 187-amino-acid chain; its full sequence is MNETQIQRETRQVVEDVLEKTNLKQGVLFVLGLSSSEVLGGQIGKESSQEIGELIVETILGILGSRGIHLAVQGCEHVNRALVVERQVAEQFDLEIVSVHPTLHAGGSGQLAAFKFMQDPVEVEFIKAHAGLDIGDTAIGMHVKHVQVPIRPILREIGHAHVTALASRPKLIGGARAHYPQDAIRKS.

Belongs to the UPF0340 family.

The polypeptide is UPF0340 protein SPP_0683 (Streptococcus pneumoniae (strain P1031)).